The primary structure comprises 70 residues: Protein SlyX homolog (70 aa).

The protein belongs to the SlyX family.

The sequence is that of Protein SlyX homolog from Agrobacterium fabrum (strain C58 / ATCC 33970) (Agrobacterium tumefaciens (strain C58)).